A 172-amino-acid chain; its full sequence is UPF0398 protein gbs0290 (172 aa).

The protein belongs to the UPF0398 family.

This chain is UPF0398 protein gbs0290, found in Streptococcus agalactiae serotype III (strain NEM316).